The following is a 442-amino-acid chain: Methionine aminopeptidase 2-1 (442 aa).

A disordered region spans residues 1–92; it reads MAAQASEELE…ISELFPNNQY (92 aa). Polar residues predominate over residues 15–25; the sequence is NGQNGHAQEQV. Residues 30–47 show a composition bias toward acidic residues; sequence EAADNDDSEDDEKEEEGG. Over residues 56–72 the composition is skewed to basic residues; sequence AKKKKKRKPKKKKKGGA. Residue His-195 participates in substrate binding. Residues Asp-215, Asp-226, and His-295 each contribute to the a divalent metal cation site. A substrate-binding site is contributed by His-303. A divalent metal cation contacts are provided by Glu-328 and Glu-423.

The protein belongs to the peptidase M24A family. Methionine aminopeptidase eukaryotic type 2 subfamily. It depends on Co(2+) as a cofactor. The cofactor is Zn(2+). Mn(2+) serves as cofactor. Requires Fe(2+) as cofactor.

The protein resides in the cytoplasm. It carries out the reaction Release of N-terminal amino acids, preferentially methionine, from peptides and arylamides.. Functionally, cotranslationally removes the N-terminal methionine from nascent proteins. The N-terminal methionine is often cleaved when the second residue in the primary sequence is small and uncharged (Met-Ala-, Cys, Gly, Pro, Ser, Thr, or Val). The protein is Methionine aminopeptidase 2-1 of Talaromyces marneffei (strain ATCC 18224 / CBS 334.59 / QM 7333) (Penicillium marneffei).